Here is a 315-residue protein sequence, read N- to C-terminus: MQINKKEIKQNLKKWNEEKKSIKSFSFTGDIILDNVSYTYSKKTPFEFRALDNADLTISDKKITCVIGTTGSGKSTMIQLTNGLLISETGQTIVGDYKIPAGLKKIKEVKDLRREVGLVFQFPEYQLFQDTIEKDIAFGPIHLGADKEEVYKKIPELLDLVSLPREYAKRSPFELSGGQKRRTAIAGIIAMDGKTLVLDEPTGGLDPKGEEDFMNLFLRLNKNQGKRIIMVTHNMDQVLKVADEVIVMHEGKVISKGSPFEIFSNQELLSKIQIEPPKLYKLMYKLKEKGTDLLNKNIRTIDEFAKAFKEVRKGK.

An ABC transporter domain is found at 31 to 275; the sequence is IILDNVSYTY…QELLSKIQIE (245 aa). 68–75 serves as a coordination point for ATP; that stretch reads GTTGSGKS.

Belongs to the ABC transporter superfamily. Energy-coupling factor EcfA family. Forms a stable energy-coupling factor (ECF) transporter complex composed of 2 membrane-embedded substrate-binding proteins (S component), 2 ATP-binding proteins (A component) and 2 transmembrane proteins (T component).

The protein resides in the cell membrane. Functionally, ATP-binding (A) component of a common energy-coupling factor (ECF) ABC-transporter complex. Unlike classic ABC transporters this ECF transporter provides the energy necessary to transport a number of different substrates. The polypeptide is Energy-coupling factor transporter ATP-binding protein EcfA2 (Mesoplasma florum (strain ATCC 33453 / NBRC 100688 / NCTC 11704 / L1) (Acholeplasma florum)).